The primary structure comprises 701 residues: Vacuolar protein sorting-associated protein 52 B (701 aa).

2 coiled-coil regions span residues 23–45 and 511–533; these read FEED…EECE and QLDI…LAKL.

The protein belongs to the VPS52 family. As to quaternary structure, component of the Golgi-associated retrograde protein (GARP) complex. Detected in pollen.

The protein localises to the golgi apparatus. It is found in the trans-Golgi network membrane. The protein resides in the endosome membrane. Its subcellular location is the golgi apparatus membrane. May be involved in retrograde transport of early and late endosomes to the late Golgi. The chain is Vacuolar protein sorting-associated protein 52 B (P2) from Arabidopsis thaliana (Mouse-ear cress).